The primary structure comprises 734 residues: Regulator of G-protein signaling rgs-6 (734 aa).

A disordered region spans residues 1–24 (MSTPCSGNEPATPTNTSPNNETSN). Positions 8 to 24 (NEPATPTNTSPNNETSN) are enriched in low complexity. Residues 46-157 (IFKKVIRDPV…YDCWPRFLRS (112 aa)) form the RGS domain. 3 disordered regions span residues 162–236 (QPSF…SPTH), 489–515 (HAVS…YSPA), and 538–734 (VNAG…AAYV). Acidic residues predominate over residues 166-176 (TDEELAADDED). The span at 180-191 (HSQPTSLNNTNE) shows a compositional bias: polar residues. Positions 194-208 (AAAQQSQPAPNAPAA) are enriched in low complexity. 2 stretches are compositionally biased toward polar residues: residues 494–506 (SDPN…SQDR) and 538–557 (VNAG…SKNR). Basic and acidic residues-rich tracts occupy residues 563 to 585 (SKTE…RSDD) and 606 to 619 (TTEE…KSGD). Over residues 642–694 (AAAAAAGASPSTSAPSTSTSVQTKTTTSPTKSPTSTTITTSGTTTSATSSVAT) the composition is skewed to low complexity. 2 stretches are compositionally biased toward polar residues: residues 705–715 (SASTPATSSQL) and 724–734 (RESSWQTAAYV).

The protein is Regulator of G-protein signaling rgs-6 of Caenorhabditis elegans.